A 902-amino-acid chain; its full sequence is Transcription factor FPSE_08121 (902 aa).

Residues 1 to 47 (MVSPDNRPGTQGPSASAHAHDSRVPRKRPGSWDNNPSTAGNRAVKKR) are disordered. The segment at residues 52 to 81 (CVSCRDRKVRCDVVNGGPPCTNCRLDDVDC) is a DNA-binding region (zn(2)-C6 fungal-type). Disordered stretches follow at residues 92 to 189 (NPAR…EAEQ), 208 to 234 (HCEQ…PANP), 258 to 277 (ATEA…SANT), and 820 to 839 (TGVA…PNMT). Residues 120–137 (TDADTAAPGPAPGSASAT) show a composition bias toward low complexity. The span at 168-177 (ETICDDDENE) shows a compositional bias: acidic residues. Composition is skewed to polar residues over residues 178–187 (NNSWHNQQEA), 220–234 (GAAT…PANP), 262–277 (PPSS…SANT), and 826–839 (GQRS…PNMT).

The protein resides in the nucleus. Transcription factor; part of the Fusarium detoxification of benzoxazolinone cluster involved in the degradation of benzoxazolinones produced by the host plant. Maize, wheat, and rye produce the 2 benzoxazinone phytoanticipins 2,4-dihy-droxy-7-methoxy-1,4-benzoxazin-3-one (DIMBOA) and 2,4-dihydroxy-1,4-benzoxazin-3-one (DIBOA) that, due to their inherent instability once released, spontaneously degrade to the more stable corresponding benzoxazolinones, 6-methoxy-2-benzoxazolinone (MBOA) and 2-benzoxazolinone (BOA), respectively. FPSE_08121 positively regulates the expression of the FBD cluster gene FPSE_08120 in response to 2-aminophenol (2-AP) treatment and contributes quantitatively to benzoxazolinone tolerance. The chain is Transcription factor FPSE_08121 from Fusarium pseudograminearum (strain CS3096) (Wheat and barley crown-rot fungus).